We begin with the raw amino-acid sequence, 228 residues long: Ribonuclease 3 (228 aa).

The 123-residue stretch at 5-127 folds into the RNase III domain; sequence KDALQDRLGY…LFGAIYLDGG (123 aa). E40 contacts Mg(2+). D44 is a catalytic residue. Residues D113 and E116 each coordinate Mg(2+). The active site involves E116. Residues 154 to 224 enclose the DRBM domain; sequence DPKTRLQEHL…AEQMLKRLED (71 aa). The interval 200 to 228 is disordered; it reads AEGEAGSRRKAEQQAAEQMLKRLEDKHER. Over residues 218-228 the composition is skewed to basic and acidic residues; that stretch reads MLKRLEDKHER.

It belongs to the ribonuclease III family. As to quaternary structure, homodimer. Mg(2+) is required as a cofactor.

The protein resides in the cytoplasm. The enzyme catalyses Endonucleolytic cleavage to 5'-phosphomonoester.. Digests double-stranded RNA. Involved in the processing of primary rRNA transcript to yield the immediate precursors to the large and small rRNAs (23S and 16S). Processes some mRNAs, and tRNAs when they are encoded in the rRNA operon. Processes pre-crRNA and tracrRNA of type II CRISPR loci if present in the organism. This chain is Ribonuclease 3, found in Alkalilimnicola ehrlichii (strain ATCC BAA-1101 / DSM 17681 / MLHE-1).